A 125-amino-acid chain; its full sequence is Glycine cleavage system H protein (125 aa).

The Lipoyl-binding domain maps to 19 to 101 (GAVVGITDFA…NGSGWFFKLT (83 aa)). K60 is subject to N6-lipoyllysine.

Belongs to the GcvH family. As to quaternary structure, the glycine cleavage system is composed of four proteins: P, T, L and H. Requires (R)-lipoate as cofactor.

In terms of biological role, the glycine cleavage system catalyzes the degradation of glycine. The H protein shuttles the methylamine group of glycine from the P protein to the T protein. The chain is Glycine cleavage system H protein from Methylocella silvestris (strain DSM 15510 / CIP 108128 / LMG 27833 / NCIMB 13906 / BL2).